The following is a 531-amino-acid chain: DNA damage-binding protein cmr1 (531 aa).

Disordered regions lie at residues 37–83 (GIFP…RGIA) and 218–264 (DASQ…MHIH). Positions 53–64 (KPKKKPAPKKIK) are enriched in basic residues. One copy of the WD 1 repeat lies at 186 to 227 (VTPERIYTMTFHPSEAKPLIFAGDKMGNLGVLDASQERPVSS). A compositionally biased stretch (acidic residues) spans 233–245 (GDEEEQEDDDDPD). WD repeat units lie at residues 253–293 (PHTR…SVET), 300–340 (SDDV…RTAV), 345–385 (LSEK…HDDP), 392–431 (LSRL…ASWE), 454–497 (GRWV…LAQL), and 500–531 (DGIT…CLWM).

This sequence belongs to the WD repeat DDB2/WDR76 family.

DNA-binding protein that binds to both single- and double-stranded DNA. Binds preferentially to UV-damaged DNA. May be involved in DNA-metabolic processes. This is DNA damage-binding protein cmr1 from Aspergillus clavatus (strain ATCC 1007 / CBS 513.65 / DSM 816 / NCTC 3887 / NRRL 1 / QM 1276 / 107).